The following is a 417-amino-acid chain: Probable pectate lyase 20 (417 aa).

An N-terminal signal peptide occupies residues 1 to 25; the sequence is MAVTQILVVFASALLLSMFFTGVDS. N29 and N53 each carry an N-linked (GlcNAc...) asparagine glycan. Positions 215, 239, and 243 each coordinate Ca(2+). R295 is an active-site residue.

It belongs to the polysaccharide lyase 1 family. Requires Ca(2+) as cofactor.

The enzyme catalyses Eliminative cleavage of (1-&gt;4)-alpha-D-galacturonan to give oligosaccharides with 4-deoxy-alpha-D-galact-4-enuronosyl groups at their non-reducing ends.. It functions in the pathway glycan metabolism; pectin degradation; 2-dehydro-3-deoxy-D-gluconate from pectin: step 2/5. The chain is Probable pectate lyase 20 from Arabidopsis thaliana (Mouse-ear cress).